Reading from the N-terminus, the 1771-residue chain is Kinase D-interacting substrate of 220 kDa (1771 aa).

At 1–499 the chain is on the cytoplasmic side; the sequence is MSVLISQSVI…QIEPLFQFSW (499 aa). 12 ANK repeats span residues 4 to 33, 37 to 66, 70 to 99, 103 to 132, 136 to 165, 169 to 198, 202 to 231, 235 to 264, 268 to 297, 301 to 330, 334 to 363, and 367 to 396; these read LISQ…DVDE, CGQT…NCNL, DNWT…NLEH, GGWT…NPSV, YSVY…KVNC, YGTT…DVDQ, NSMT…NVNL, DGNT…YVNI, SGDT…DIDI, DNKT…DTEI, DGET…KVSA, and KGDT…DGRL. The 514-residue stretch at 440-953 folds into the KAP NTPase domain; it reads YDLYSSALAD…NIVSVTGRLL (514 aa). The helical transmembrane segment at 500–520 threads the bilayer; that stretch reads LIVFLTLLLCGGLGLLFAFTV. Residues 521 to 524 are Extracellular-facing; that stretch reads HPNL. Residues 525–545 traverse the membrane as a helical segment; that stretch reads GIAVSLSFLALLYIFFIVIYF. Residues 546–659 are Cytoplasmic-facing; sequence GGRREGESWN…KWKKTCCLPS (114 aa). Residues 660–680 form a helical membrane-spanning segment; sequence FVIFLFIIGCIISGITLLAIF. The Extracellular segment spans residues 681–685; sequence RVDPK. The helical transmembrane segment at 686–706 threads the bilayer; it reads HLTVNAVLISIASVVGLAFVL. Residues 707-1771 are Cytoplasmic-facing; sequence NCRTWWQVLD…GFGEERESIL (1065 aa). Phosphoserine is present on residues serine 882 and serine 885. Threonine 914 is subject to Phosphothreonine. The residue at position 918 (serine 918) is a Phosphoserine. Positions 1089 to 1092 are mediates interaction with CRKL; the sequence is PRAP. Phosphoserine is present on serine 1163. 4 disordered regions span residues 1182–1202, 1285–1310, 1344–1368, and 1397–1564; these read DAAE…PAPG, PEDP…RASH, RHSN…SQDS, and LEGG…EPIR. 6 positions are modified to phosphoserine: serine 1296, serine 1352, serine 1359, serine 1361, serine 1362, and serine 1365. Over residues 1346–1358 the composition is skewed to polar residues; the sequence is SNLSWQSQTRRTP. A compositionally biased stretch (low complexity) spans 1359–1368; sequence SLSSLNSQDS. Positions 1403 to 1430 are enriched in polar residues; that stretch reads STTISGRSSPHSTYYMGQSSSGGSIHSN. A compositionally biased stretch (basic and acidic residues) spans 1431–1457; it reads LEQEKGKDSEPKPDDGRKSFLMKRGDV. Residues 1460-1470 are compositionally biased toward polar residues; sequence YSSSGVSTNDA. A phosphoserine mark is found at serine 1521, serine 1526, serine 1555, and serine 1574. Residues 1522-1532 are compositionally biased toward acidic residues; the sequence is DEDESGTEESD. Residues 1537-1561 are compositionally biased toward basic and acidic residues; that stretch reads LKDDKDRKAEGKVERVPKSPEHSAE. Residues 1578 to 1633 are disordered; sequence LDKKDSSDSGVRSSESSPNHSLHNEVADDSQLEKANLIELEDDSHSGKRGIPHSLS. The segment covering 1585–1594 has biased composition (low complexity); it reads DSGVRSSESS. Residues serine 1623 and serine 1633 each carry the phosphoserine modification. Threonine 1679 bears the Phosphothreonine mark. Phosphoserine is present on serine 1681. Threonine 1684 carries the post-translational modification Phosphothreonine. Polar residues predominate over residues 1713–1731; sequence LRPSSSPNPTTIQNENLKS. A disordered region spans residues 1713 to 1771; the sequence is LRPSSSPNPTTIQNENLKSMTHKRSQRSSYTRLSKDPPELHAAASSESTGFGEERESIL. The PDZ-binding signature appears at 1766 to 1771; that stretch reads ERESIL.

As to quaternary structure, found in a complex, at least composed of KIDINS220, MAGI2, NTRK1 and RAPGEF2; the complex is mainly formed at late endosomes in a nerve growth factor (NGF)-dependent manner. Interacts with RAPGEF2; the interaction is strengthened after NGF stimulation. Isoform 2 interacts (via C-terminal domain) with MAGI2 isoform 1 (via PDZ domain). Interacts with NTRK1, NTRK2, NTRK3, ERKL and NGFR. Can form a ternary complex with NGFR and NTRK1 and this complex is affected by the expression levels of KIDINS220/ARMS. An increase in KIDINS220/ARMS expression leads to a decreased association of NGFR and NTRK1. Interacts (via PDZ-binding motif) with SNTA1 and SNTB2 (via PDZ domains). Interacts with EPHA4 and PRKD1. Tyrosine phosphorylated by NTRK1, NTRK2, EPHB2 and EPHA4. Phosphorylation at Ser-918 is induced by phorbol ester treatment. Phosphorylation by NTRK2 is induced by brain-derived neurotrophic factor (BDNF) and neurotrophin-4/5. Phosphorylation by NTRK1 is induced by nerve growth factor (NGF). In terms of tissue distribution, abundant in developing and adult neural tissues as well as neuroendocrine cells and dendritic cells. Overexpressed in melanoma and melanoma cell lines.

It is found in the membrane. The protein localises to the late endosome. Promotes a prolonged MAP-kinase signaling by neurotrophins through activation of a Rap1-dependent mechanism. Provides a docking site for the CRKL-C3G complex, resulting in Rap1-dependent sustained ERK activation. May play an important role in regulating postsynaptic signal transduction through the syntrophin-mediated localization of receptor tyrosine kinases such as EPHA4. In cooperation with SNTA1 can enhance EPHA4-induced JAK/STAT activation. Plays a role in nerve growth factor (NGF)-induced recruitment of RAPGEF2 to late endosomes and neurite outgrowth. May play a role in neurotrophin- and ephrin-mediated neuronal outgrowth and in axon guidance during neural development and in neuronal regeneration. Modulates stress-induced apoptosis of melanoma cells via regulation of the MEK/ERK signaling pathway. This chain is Kinase D-interacting substrate of 220 kDa (KIDINS220), found in Homo sapiens (Human).